A 136-amino-acid polypeptide reads, in one-letter code: uncharacterized protein (136 aa).

This is an uncharacterized protein from Caenorhabditis elegans.